The chain runs to 82 residues: RNA-binding protein Hfq (82 aa).

Positions 11 to 71 (DTFLNHVRKT…ISTIMPGAPI (61 aa)) constitute a Sm domain.

Belongs to the Hfq family. In terms of assembly, homohexamer.

Its function is as follows. RNA chaperone that binds small regulatory RNA (sRNAs) and mRNAs to facilitate mRNA translational regulation in response to envelope stress, environmental stress and changes in metabolite concentrations. Also binds with high specificity to tRNAs. In Rhodopseudomonas palustris (strain TIE-1), this protein is RNA-binding protein Hfq.